Reading from the N-terminus, the 558-residue chain is Urocanate hydratase (558 aa).

Residues 50–51 (GG), Q128, 174–176 (GMG), E194, R199, 240–241 (NA), 261–265 (QTSAH), 271–272 (YI), and Y320 contribute to the NAD(+) site. C408 is an active-site residue. G490 serves as a coordination point for NAD(+).

It belongs to the urocanase family. Requires NAD(+) as cofactor.

The protein resides in the cytoplasm. It catalyses the reaction 4-imidazolone-5-propanoate = trans-urocanate + H2O. It functions in the pathway amino-acid degradation; L-histidine degradation into L-glutamate; N-formimidoyl-L-glutamate from L-histidine: step 2/3. Its function is as follows. Catalyzes the conversion of urocanate to 4-imidazolone-5-propionate. The chain is Urocanate hydratase from Deinococcus radiodurans (strain ATCC 13939 / DSM 20539 / JCM 16871 / CCUG 27074 / LMG 4051 / NBRC 15346 / NCIMB 9279 / VKM B-1422 / R1).